A 316-amino-acid chain; its full sequence is Protease HtpX homolog (316 aa).

The chain crosses the membrane as a helical span at residues 16–36 (LFMGAGFLIGGATGMMIALVF). His134 contacts Zn(2+). The active site involves Glu135. Residue His138 participates in Zn(2+) binding. The next 2 helical transmembrane spans lie at 149 to 169 (VTAT…FFGG) and 180 to 200 (LGGM…AMLV). Residue Glu209 coordinates Zn(2+). The interval 295 to 316 (PVMAATTSSSVPLSGERGGPWS) is disordered.

This sequence belongs to the peptidase M48B family. Requires Zn(2+) as cofactor.

It is found in the cell inner membrane. In Caulobacter vibrioides (strain ATCC 19089 / CIP 103742 / CB 15) (Caulobacter crescentus), this protein is Protease HtpX homolog.